A 98-amino-acid polypeptide reads, in one-letter code: NADH-ubiquinone oxidoreductase chain 4L (98 aa).

Transmembrane regions (helical) follow at residues 1–21 (MNLI…GLIF), 26–46 (IINI…LFVL), and 61–81 (LYIL…VVIL).

The protein belongs to the complex I subunit 4L family.

The protein localises to the mitochondrion membrane. The enzyme catalyses a ubiquinone + NADH + 5 H(+)(in) = a ubiquinol + NAD(+) + 4 H(+)(out). Its function is as follows. Core subunit of the mitochondrial membrane respiratory chain NADH dehydrogenase (Complex I) that is believed to belong to the minimal assembly required for catalysis. Complex I functions in the transfer of electrons from NADH to the respiratory chain. The immediate electron acceptor for the enzyme is believed to be ubiquinone. This Dictyostelium citrinum (Slime mold) protein is NADH-ubiquinone oxidoreductase chain 4L (nad4L).